Consider the following 635-residue polypeptide: Early transcription factor 70 kDa subunit (635 aa).

The Helicase ATP-binding domain occupies 32-185 (RSILDENNSV…SNIISIMSDE (154 aa)). 45-52 (HIMGSGKT) contacts ATP. The DEXH box motif lies at 135 to 138 (DEAH).

This sequence belongs to the helicase family. VETF subfamily. Heterodimer of a 70 kDa and a 82 kDa subunit. Part of the early transcription complex composed of ETF, RAP94, and the DNA-directed RNA polymerase.

It localises to the virion. Functionally, acts with RNA polymerase to initiate transcription from early gene promoters. Is recruited by the RPO-associated protein of 94 kDa (RAP94) to form the early transcription complex, which also contains the core RNA polymerase. ETF heterodimer binds to early gene promoters. The chain is Early transcription factor 70 kDa subunit (VETFS) from Homo sapiens (Human).